Here is a 451-residue protein sequence, read N- to C-terminus: tRNA modification GTPase MnmE (451 aa).

Residues arginine 28, glutamate 85, and lysine 124 each coordinate (6S)-5-formyl-5,6,7,8-tetrahydrofolate. The TrmE-type G domain occupies glycine 220–leucine 373. Residue asparagine 230 coordinates K(+). Residues asparagine 230–serine 235, threonine 249–threonine 255, and aspartate 274–glycine 277 each bind GTP. Serine 234 serves as a coordination point for Mg(2+). Residues threonine 249, valine 251, and threonine 254 each contribute to the K(+) site. Mg(2+) is bound at residue threonine 255. Lysine 451 serves as a coordination point for (6S)-5-formyl-5,6,7,8-tetrahydrofolate.

This sequence belongs to the TRAFAC class TrmE-Era-EngA-EngB-Septin-like GTPase superfamily. TrmE GTPase family. As to quaternary structure, homodimer. Heterotetramer of two MnmE and two MnmG subunits. K(+) serves as cofactor.

It is found in the cytoplasm. Its function is as follows. Exhibits a very high intrinsic GTPase hydrolysis rate. Involved in the addition of a carboxymethylaminomethyl (cmnm) group at the wobble position (U34) of certain tRNAs, forming tRNA-cmnm(5)s(2)U34. This Xylella fastidiosa (strain Temecula1 / ATCC 700964) protein is tRNA modification GTPase MnmE.